Here is a 429-residue protein sequence, read N- to C-terminus: Ribosomal RNA small subunit methyltransferase B (429 aa).

S-adenosyl-L-methionine is bound by residues 254–260 (CAAPGGK), Asp-277, Asp-303, and Asp-322. Cys-375 functions as the Nucleophile in the catalytic mechanism.

It belongs to the class I-like SAM-binding methyltransferase superfamily. RsmB/NOP family.

The protein resides in the cytoplasm. It catalyses the reaction cytidine(967) in 16S rRNA + S-adenosyl-L-methionine = 5-methylcytidine(967) in 16S rRNA + S-adenosyl-L-homocysteine + H(+). Functionally, specifically methylates the cytosine at position 967 (m5C967) of 16S rRNA. The polypeptide is Ribosomal RNA small subunit methyltransferase B (Photorhabdus laumondii subsp. laumondii (strain DSM 15139 / CIP 105565 / TT01) (Photorhabdus luminescens subsp. laumondii)).